The chain runs to 291 residues: 4-hydroxy-tetrahydrodipicolinate synthase (291 aa).

Thr-45 lines the pyruvate pocket. Tyr-133 functions as the Proton donor/acceptor in the catalytic mechanism. Lys-161 (schiff-base intermediate with substrate) is an active-site residue. Ile-203 provides a ligand contact to pyruvate.

The protein belongs to the DapA family. As to quaternary structure, homotetramer; dimer of dimers.

It localises to the cytoplasm. The catalysed reaction is L-aspartate 4-semialdehyde + pyruvate = (2S,4S)-4-hydroxy-2,3,4,5-tetrahydrodipicolinate + H2O + H(+). The protein operates within amino-acid biosynthesis; L-lysine biosynthesis via DAP pathway; (S)-tetrahydrodipicolinate from L-aspartate: step 3/4. Catalyzes the condensation of (S)-aspartate-beta-semialdehyde [(S)-ASA] and pyruvate to 4-hydroxy-tetrahydrodipicolinate (HTPA). This Saccharophagus degradans (strain 2-40 / ATCC 43961 / DSM 17024) protein is 4-hydroxy-tetrahydrodipicolinate synthase.